A 177-amino-acid chain; its full sequence is Protein C (177 aa).

Polar residues predominate over residues 1-10 (MSTKAWNASR). The disordered stretch occupies residues 1–38 (MSTKAWNASRLSGPDPSTPWSLRKPLQHGSRPPKGKRL).

This sequence belongs to the morbillivirus protein C family.

This chain is Protein C (P/V/C), found in Rinderpest virus (strain RBOK) (RDV).